A 187-amino-acid polypeptide reads, in one-letter code: MKLVLGISGASGIPLALRFLEKLPKEIEIFVVASKNAHVVALEESNINLKNAMKDLRPSATFFNEQDIHASIASGSYGIHKMAIIPASMDMVAKIAHGFGGDLISRSASVMLKEKRPLLIAPREMPLSAIMLENLLKLAHSNAIIAPPMMTYYTQSKTLEAMQDFLVGKWFDSLGIENDLYPRWGMN.

Residues 9–11, S34, and R123 contribute to the FMN site; that span reads GAS. Positions 153 and 169 each coordinate dimethylallyl phosphate.

The protein belongs to the UbiX/PAD1 family.

It catalyses the reaction dimethylallyl phosphate + FMNH2 = prenylated FMNH2 + phosphate. Its function is as follows. Flavin prenyltransferase that catalyzes the synthesis of the prenylated FMN cofactor (prenyl-FMN) for 4-hydroxy-3-polyprenylbenzoic acid decarboxylase UbiD. The prenyltransferase is metal-independent and links a dimethylallyl moiety from dimethylallyl monophosphate (DMAP) to the flavin N5 and C6 atoms of FMN. The protein is Flavin prenyltransferase UbiX of Helicobacter pylori (strain J99 / ATCC 700824) (Campylobacter pylori J99).